The following is an 85-amino-acid chain: High-potential iron-sulfur protein (85 aa).

[4Fe-4S] cluster is bound by residues C43, C46, C63, and C77.

This sequence belongs to the high-potential iron-sulfur protein (HiPIP) family. As to quaternary structure, homodimer.

Its subcellular location is the periplasm. In terms of biological role, specific class of high-redox-potential 4Fe-4S ferredoxins. Functions in anaerobic electron transport in most purple and in some other photosynthetic bacteria and in at least one genus (Paracoccus) of halophilic, denitrifying bacteria. This Allochromatium warmingii (Chromatium warmingii) protein is High-potential iron-sulfur protein.